The following is a 318-amino-acid chain: Ornithine carbamoyltransferase (318 aa).

Carbamoyl phosphate is bound by residues 63-66 (STRT), Gln-90, Arg-114, and 141-144 (HPCQ). L-ornithine-binding positions include Asn-172, Asp-235, and 239–240 (SM). Carbamoyl phosphate-binding positions include 275-276 (CL) and Arg-303.

It belongs to the aspartate/ornithine carbamoyltransferase superfamily. OTCase family.

The protein resides in the cytoplasm. The catalysed reaction is carbamoyl phosphate + L-ornithine = L-citrulline + phosphate + H(+). It functions in the pathway amino-acid biosynthesis; L-arginine biosynthesis; L-arginine from L-ornithine and carbamoyl phosphate: step 1/3. In terms of biological role, reversibly catalyzes the transfer of the carbamoyl group from carbamoyl phosphate (CP) to the N(epsilon) atom of ornithine (ORN) to produce L-citrulline. In Parasynechococcus marenigrum (strain WH8102), this protein is Ornithine carbamoyltransferase.